The sequence spans 275 residues: Elongation factor Ts (275 aa).

Positions T76–V79 are involved in Mg(2+) ion dislocation from EF-Tu.

It belongs to the EF-Ts family.

The protein localises to the cytoplasm. In terms of biological role, associates with the EF-Tu.GDP complex and induces the exchange of GDP to GTP. It remains bound to the aminoacyl-tRNA.EF-Tu.GTP complex up to the GTP hydrolysis stage on the ribosome. This is Elongation factor Ts from Nocardia farcinica (strain IFM 10152).